Consider the following 470-residue polypeptide: Glucose-1-phosphate adenylyltransferase large subunit 1 (470 aa).

It belongs to the bacterial/plant glucose-1-phosphate adenylyltransferase family. As to quaternary structure, heterotetramer. Prominently expressed in the leaves and a weaker expression is seen in the tubers.

It localises to the plastid. The protein localises to the chloroplast. The protein resides in the amyloplast. It catalyses the reaction alpha-D-glucose 1-phosphate + ATP + H(+) = ADP-alpha-D-glucose + diphosphate. Its pathway is glycan biosynthesis; starch biosynthesis. With respect to regulation, activated by 3'phosphoglycerate, inhibited by orthophosphate. Allosteric regulation. In terms of biological role, this protein plays a role in synthesis of starch. It catalyzes the synthesis of the activated glycosyl donor, ADP-glucose from Glc-1-P and ATP. This is Glucose-1-phosphate adenylyltransferase large subunit 1 (AGPS1) from Solanum tuberosum (Potato).